We begin with the raw amino-acid sequence, 485 residues long: Transcription factor ETV6 (485 aa).

Residues 1-10 (MSETPAQSSI) show a composition bias toward polar residues. Positions 1–32 (MSETPAQSSIKQERISYTPPESPVASHRSSTP) are disordered. N6-acetyllysine; alternate is present on K11. Residue K11 forms a Glycyl lysine isopeptide (Lys-Gly) (interchain with G-Cter in SUMO2); alternate linkage. Residue T18 is modified to Phosphothreonine. At S22 the chain carries Phosphoserine. A PNT domain is found at 41-125 (ALRMEEDSIH…ELLQHILKQR (85 aa)). The disordered stretch occupies residues 157-210 (NCVQRTPRTPAESVHHNPPTIELLHRPRSPITTNHRPSPDPEQQRPQRSPLDNM). T165 bears the Phosphothreonine mark. S215, S240, and S251 each carry phosphoserine. Residue K284 forms a Glycyl lysine isopeptide (Lys-Gly) (interchain with G-Cter in SUMO2) linkage. K298 carries the N6-acetyllysine; alternate modification. A Glycyl lysine isopeptide (Lys-Gly) (interchain with G-Cter in SUMO2); alternate cross-link involves residue K298. At S319 the chain carries Phosphoserine. A DNA-binding region (ETS) is located at residues 335–416 (RLLWDYVYQL…PGQRLLFRFM (82 aa)). Residues K399 and K417 each participate in a glycyl lysine isopeptide (Lys-Gly) (interchain with G-Cter in SUMO2) cross-link. The disordered stretch occupies residues 440–485 (EQTYQEDEPTIASPVGWPRGNLPTGTAGGVMEAGELGVAVKEETRE).

Belongs to the ETS family. As to quaternary structure, can form homodimers or heterodimers with TEL2 or FLI1. Interacts with L3MBTL1 and HDAC9.

The protein localises to the nucleus. Functionally, transcriptional repressor; binds to the DNA sequence 5'-CCGGAAGT-3'. Plays a role in hematopoiesis and malignant transformation. This Mus musculus (Mouse) protein is Transcription factor ETV6 (Etv6).